Reading from the N-terminus, the 239-residue chain is UPF0173 metal-dependent hydrolase Dvul_0081 (239 aa).

Belongs to the UPF0173 family.

This chain is UPF0173 metal-dependent hydrolase Dvul_0081, found in Nitratidesulfovibrio vulgaris (strain DP4) (Desulfovibrio vulgaris).